The sequence spans 293 residues: Undecaprenyl-diphosphatase (293 aa).

The next 6 helical transmembrane spans lie at valine 74–phenylalanine 94, tryptophan 107–isoleucine 127, methionine 134–methionine 154, phenylalanine 209–alanine 229, valine 243–valine 263, and phenylalanine 271–leucine 291.

The protein belongs to the UppP family.

The protein localises to the cell membrane. It carries out the reaction di-trans,octa-cis-undecaprenyl diphosphate + H2O = di-trans,octa-cis-undecaprenyl phosphate + phosphate + H(+). Functionally, catalyzes the dephosphorylation of undecaprenyl diphosphate (UPP). Confers resistance to bacitracin. The protein is Undecaprenyl-diphosphatase of Corynebacterium glutamicum (strain ATCC 13032 / DSM 20300 / JCM 1318 / BCRC 11384 / CCUG 27702 / LMG 3730 / NBRC 12168 / NCIMB 10025 / NRRL B-2784 / 534).